A 372-amino-acid chain; its full sequence is N-methyl-L-tryptophan oxidase (372 aa).

Residue 4–34 (DLIIIGSGSVGAAAGYYATRAGLKVLMTDAH) participates in FAD binding. At Cys-307 the chain carries S-8alpha-FAD cysteine.

The protein belongs to the MSOX/MTOX family. MTOX subfamily. Monomer. FAD is required as a cofactor.

It carries out the reaction N(alpha)-methyl-L-tryptophan + O2 + H2O = L-tryptophan + formaldehyde + H2O2. In terms of biological role, catalyzes the oxidative demethylation of N-methyl-L-tryptophan. In Salmonella dublin (strain CT_02021853), this protein is N-methyl-L-tryptophan oxidase.